The sequence spans 201 residues: Large ribosomal subunit protein uL4 (201 aa).

Positions 45 to 72 (AQKTRAEVTGSGKKPWRQKGTGRARAGS) are disordered.

Belongs to the universal ribosomal protein uL4 family. Part of the 50S ribosomal subunit.

Functionally, one of the primary rRNA binding proteins, this protein initially binds near the 5'-end of the 23S rRNA. It is important during the early stages of 50S assembly. It makes multiple contacts with different domains of the 23S rRNA in the assembled 50S subunit and ribosome. In terms of biological role, forms part of the polypeptide exit tunnel. The protein is Large ribosomal subunit protein uL4 of Shewanella frigidimarina (strain NCIMB 400).